The sequence spans 798 residues: Shutoff protein (798 aa).

Positions 1–14 (MESTADGDKARGEE) are enriched in basic and acidic residues. Residues 1-123 (MESTADGDKA…SHSSDSELGC (123 aa)) are disordered. Residues 33–49 (APEDEHPDDGEPDEPAD) show a composition bias toward acidic residues. Residues 68–80 (GGRDAECDGEAAR) are compositionally biased toward basic and acidic residues. The span at 86–105 (DESSAPTTPSTAVRRSSGES) shows a compositional bias: polar residues. The tract at residues 309–376 (LMEVLLQPFA…GRPLYRSARA (68 aa)) is binding to host EIF4G. In terms of domain architecture, RRM spans 379–497 (SVFREPSSIK…AIYALETPTE (119 aa)). Y711 bears the Phosphotyrosine; by host mark. Residues 740–798 (YADHARGAATSAEPSRALRPTSVATAAGNRTRGCSSARYRLGPTLRRRSNSSWPREWST) are disordered. Residues 789 to 798 (NSSWPREWST) show a composition bias toward polar residues.

The protein belongs to the adenoviridae shutoff protein family. In terms of assembly, monomer. Interacts with hexon protein; this interaction allows chaperoning and trimerization of hexon proteins. Interacts (via N-terminus) with host initiation factor EIF4G (via C-terminus). Interacts (via RRM domain) with viral mRNAs that contain the tripartite leader; this interaction allows ribosome shunting and expression of viral late mRNAs. Might be cleaved by the viral protease. Post-translationally, phosphorylated. Tyrosine phosphorylation enhances preferential binding to tripartite leader mRNAs and allows ribosome shunting. In terms of processing, methylated. Asymmetric dimethylation by host PRMT1 of the Arg/Gly-rich region may regulate shutoff protein binding to hexon and promote the capsid assembly in the nucleus.

The protein localises to the host cytoplasm. Protein that inhibits host translation while promoting late viral translation by ribosome shunting. Blocks host cap-dependent translation by binding to eIF4G, displacing MKNK1 from cap initiation complexes and preventing EIF4E phosphorylation. Binds to the tripartite leader sequence of viral late mRNAs and recruits host eIF4G, PABPC1/poly-A binding protein and 40S ribosomes subunits on viral mRNAs, allowing ribosome shunting and efficient translation of late viral mRNAs even though conventional translation via ribosome scanning from the cap has been shut off in the host cell. During assembly, acts as a chaperone protein that helps hexon proteins assembly into trimers. This chain is Shutoff protein, found in Galliformes (FAdV-10).